Reading from the N-terminus, the 407-residue chain is Tyrosine--tRNA ligase (407 aa).

Y35 serves as a coordination point for L-tyrosine. Residues 40–49 (PTADSLHVGH) carry the 'HIGH' region motif. The L-tyrosine site is built by Y168 and Q172. The short motif at 228 to 232 (KMGKT) is the 'KMSKS' region element. K231 lines the ATP pocket. An S4 RNA-binding domain is found at 341–405 (NPLVDLLAKC…RGKKNFNRIV (65 aa)).

Belongs to the class-I aminoacyl-tRNA synthetase family. TyrS type 1 subfamily. As to quaternary structure, homodimer.

The protein resides in the cytoplasm. It carries out the reaction tRNA(Tyr) + L-tyrosine + ATP = L-tyrosyl-tRNA(Tyr) + AMP + diphosphate + H(+). In terms of biological role, catalyzes the attachment of tyrosine to tRNA(Tyr) in a two-step reaction: tyrosine is first activated by ATP to form Tyr-AMP and then transferred to the acceptor end of tRNA(Tyr). The sequence is that of Tyrosine--tRNA ligase from Clostridium botulinum (strain 657 / Type Ba4).